The chain runs to 49 residues: Large ribosomal subunit protein bL33A (49 aa).

It belongs to the bacterial ribosomal protein bL33 family.

This Staphylococcus aureus (strain Mu3 / ATCC 700698) protein is Large ribosomal subunit protein bL33A.